We begin with the raw amino-acid sequence, 88 residues long: Small ribosomal subunit protein bS18B (88 aa).

Belongs to the bacterial ribosomal protein bS18 family. In terms of assembly, part of the 30S ribosomal subunit. Forms a tight heterodimer with protein bS6.

Binds as a heterodimer with protein bS6 to the central domain of the 16S rRNA, where it helps stabilize the platform of the 30S subunit. The protein is Small ribosomal subunit protein bS18B (rpsR2) of Mycobacterium bovis (strain ATCC BAA-935 / AF2122/97).